The primary structure comprises 253 residues: Imidazole glycerol phosphate synthase subunit HisF (253 aa).

Catalysis depends on residues Asp11 and Asp130.

The protein belongs to the HisA/HisF family. Heterodimer of HisH and HisF.

Its subcellular location is the cytoplasm. It carries out the reaction 5-[(5-phospho-1-deoxy-D-ribulos-1-ylimino)methylamino]-1-(5-phospho-beta-D-ribosyl)imidazole-4-carboxamide + L-glutamine = D-erythro-1-(imidazol-4-yl)glycerol 3-phosphate + 5-amino-1-(5-phospho-beta-D-ribosyl)imidazole-4-carboxamide + L-glutamate + H(+). It functions in the pathway amino-acid biosynthesis; L-histidine biosynthesis; L-histidine from 5-phospho-alpha-D-ribose 1-diphosphate: step 5/9. Functionally, IGPS catalyzes the conversion of PRFAR and glutamine to IGP, AICAR and glutamate. The HisF subunit catalyzes the cyclization activity that produces IGP and AICAR from PRFAR using the ammonia provided by the HisH subunit. This Methylibium petroleiphilum (strain ATCC BAA-1232 / LMG 22953 / PM1) protein is Imidazole glycerol phosphate synthase subunit HisF.